The primary structure comprises 264 residues: Undecaprenyl-diphosphatase (264 aa).

The next 8 helical transmembrane spans lie at valine 7 to histidine 27, leucine 39 to tyrosine 59, isoleucine 89 to phenylalanine 109, leucine 112 to leucine 132, isoleucine 145 to serine 165, serine 182 to leucine 202, methionine 212 to phenylalanine 232, and serine 244 to phenylalanine 264.

This sequence belongs to the UppP family.

Its subcellular location is the cell inner membrane. It catalyses the reaction di-trans,octa-cis-undecaprenyl diphosphate + H2O = di-trans,octa-cis-undecaprenyl phosphate + phosphate + H(+). Its function is as follows. Catalyzes the dephosphorylation of undecaprenyl diphosphate (UPP). Confers resistance to bacitracin. In Borrelia hermsii (strain HS1 / DAH), this protein is Undecaprenyl-diphosphatase.